A 478-amino-acid polypeptide reads, in one-letter code: 2,5-dioxopentanoate dehydrogenase (478 aa).

Residues 148–149 (WN), 172–175 (KPAT), and 225–226 (GS) each bind NADP(+). Glu-249 acts as the Proton acceptor in catalysis. Cys-283 serves as the catalytic Nucleophile. NADP(+) is bound at residue Glu-379.

Belongs to the aldehyde dehydrogenase family. Homotetramer.

It carries out the reaction 2,5-dioxopentanoate + NADP(+) + H2O = 2-oxoglutarate + NADPH + 2 H(+). Functionally, 2,5-dioxopentanoate dehydrogenase involved in the degradation of pentoses such as D-arabinose or D-xylose, a major component of hemicelluloses such as xylan. Catalyzes the fifth reaction in the pentose utilization pathway through dehydratation of 2,5-dioxopentanoate into 2-oxoglutarate. Also shows dehydrogenase activity toward glycolaldehyde and DL-glyceraldehyde. The protein is 2,5-dioxopentanoate dehydrogenase of Saccharolobus solfataricus (strain ATCC 35092 / DSM 1617 / JCM 11322 / P2) (Sulfolobus solfataricus).